A 208-amino-acid polypeptide reads, in one-letter code: Fibroblast growth factor 6 (208 aa).

A signal peptide spans 1 to 37 (MALGQRLFITMSRGAGRVQGTLQALVFLGVLVGMVVP). Residue Asn45 is glycosylated (N-linked (GlcNAc...) asparagine). Cysteines 90 and 157 form a disulfide.

The protein belongs to the heparin-binding growth factors family. Interacts with FGFR1, FGFR2 and FGFR4. Affinity between fibroblast growth factors (FGFs) and their receptors is increased by heparan sulfate glycosaminoglycans that function as coreceptors. As to expression, embryos, adult muscles and adult testis.

It localises to the secreted. The protein localises to the extracellular space. In terms of biological role, plays an important role in the regulation of cell proliferation, cell differentiation, angiogenesis and myogenesis, and is required for normal muscle regeneration. This chain is Fibroblast growth factor 6 (Fgf6), found in Mus musculus (Mouse).